We begin with the raw amino-acid sequence, 349 residues long: Small ribosomal subunit protein eS6 (349 aa).

Positions 224–349 are disordered; that stretch reads RRRSRLSSMR…AKKEKKQKKK (126 aa). Basic and acidic residues-rich tracts occupy residues 231–251 and 260–334; these read SMRD…EKAA and KKEA…EAAK.

Belongs to the eukaryotic ribosomal protein eS6 family. Component of the small ribosomal subunit. Part of the small subunit (SSU) processome, composed of more than 70 proteins and the RNA chaperone small nucleolar RNA (snoRNA) U3. Post-translationally, ribosomal protein S6 is the major substrate of protein kinases in eukaryote ribosomes.

The protein localises to the cytoplasm. Its subcellular location is the nucleus. The protein resides in the nucleolus. Functionally, component of the 40S small ribosomal subunit. Plays an important role in controlling cell growth and proliferation through the selective translation of particular classes of mRNA. Part of the small subunit (SSU) processome, first precursor of the small eukaryotic ribosomal subunit. During the assembly of the SSU processome in the nucleolus, many ribosome biogenesis factors, an RNA chaperone and ribosomal proteins associate with the nascent pre-rRNA and work in concert to generate RNA folding, modifications, rearrangements and cleavage as well as targeted degradation of pre-ribosomal RNA by the RNA exosome. This is Small ribosomal subunit protein eS6 (RpS6) from Aedes albopictus (Asian tiger mosquito).